A 504-amino-acid polypeptide reads, in one-letter code: Cytochrome P450 monooxygenase braC (504 aa).

The chain crosses the membrane as a helical span at residues 4 to 24 (LYLPTIWASTLTAATIFIVAV). C448 provides a ligand contact to heme.

Belongs to the cytochrome P450 family. Requires heme as cofactor.

The protein resides in the membrane. It participates in secondary metabolite biosynthesis. Functionally, cytochrome P450 monooxygenase; part of the gene cluster that mediates the biosynthesis of the brasilane terpene glycosides brasilane D and E. The biosynthesis starts with the activity of the terpene cyclase braA that converts farnesyl pyrophosphate into the sesquiterpene alcohol trichobrasilenol. Subsequently, trichobrasilenol is glycosylated by the O-glycosyltransferase braB putatively using UDP-GlcNAc as sugar donor to yield brasilane A. The latter then undergoes two rounds of oxidation performed by the cytochrome P450 monooxygenase braC. In the first round braC hydroxylates C-12 forming brasilane D, which serves as substrate in the second round to establish the epoxide at the bond between C-5 and C-10 and oxidize the alcohol at C-12 to an aldehyde leading to the final product brasilane E. This chain is Cytochrome P450 monooxygenase braC, found in Annulohypoxylon truncatum (Hypoxylon truncatum).